Consider the following 265-residue polypeptide: 4-hydroxy-tetrahydrodipicolinate reductase (265 aa).

NAD(+)-binding positions include 7-12 and aspartate 33; that span reads GASGRM. NADP(+) is bound at residue arginine 34. NAD(+) contacts are provided by residues 96-98 and 120-123; these read GTT and AANM. Residue histidine 153 is the Proton donor/acceptor of the active site. Histidine 154 contributes to the (S)-2,3,4,5-tetrahydrodipicolinate binding site. The Proton donor role is filled by lysine 157. Residue 163-164 participates in (S)-2,3,4,5-tetrahydrodipicolinate binding; sequence GT.

This sequence belongs to the DapB family.

The protein resides in the cytoplasm. The enzyme catalyses (S)-2,3,4,5-tetrahydrodipicolinate + NAD(+) + H2O = (2S,4S)-4-hydroxy-2,3,4,5-tetrahydrodipicolinate + NADH + H(+). It catalyses the reaction (S)-2,3,4,5-tetrahydrodipicolinate + NADP(+) + H2O = (2S,4S)-4-hydroxy-2,3,4,5-tetrahydrodipicolinate + NADPH + H(+). It participates in amino-acid biosynthesis; L-lysine biosynthesis via DAP pathway; (S)-tetrahydrodipicolinate from L-aspartate: step 4/4. Its function is as follows. Catalyzes the conversion of 4-hydroxy-tetrahydrodipicolinate (HTPA) to tetrahydrodipicolinate. The chain is 4-hydroxy-tetrahydrodipicolinate reductase from Burkholderia ambifaria (strain ATCC BAA-244 / DSM 16087 / CCUG 44356 / LMG 19182 / AMMD) (Burkholderia cepacia (strain AMMD)).